The following is a 137-amino-acid chain: MAVEQDIFDAVVMADERFHGEGYQEGYEEGSSLGIVEGKRYGMVHGAKIGSEIGCYRGFALAWKCLLHSGAGEKDSRKMKVVEALIALLQDFPYDDPTYEKLHEDLDRIRGKFRQLCSLLNVQPDFKVTPGGSGLAF.

N-acetylalanine is present on Ala-2. Positions 22 to 58 (GYQEGYEEGSSLGIVEGKRYGMVHGAKIGSEIGCYRG) are deca-GX3 motif; required for interaction with YAE1 and the CIA complex.

The protein belongs to the LTO1 family. As to quaternary structure, forms a complex with YAE1. Interacts with PYCR1 and PYCR2.

Its subcellular location is the nucleus. The complex LTO1:YAE1 functions as a target specific adapter that probably recruits apo-ABCE1 to the cytosolic iron-sulfur protein assembly (CIA) complex machinery. May be required for biogenesis of the large ribosomal subunit and initiation of translation. May play a role in the regulation of proline metabolism and ROS production. This chain is Protein LTO1 homolog, found in Mus musculus (Mouse).